The sequence spans 338 residues: Lipoate-protein ligase A (338 aa).

The region spanning 29 to 216 is the BPL/LPL catalytic domain; it reads PATQRVLFLW…AFFVHYGERV (188 aa). ATP is bound by residues arginine 71, 76-79, and lysine 134; that span reads GAVF. Lysine 134 lines the (R)-lipoate pocket.

It belongs to the LplA family. As to quaternary structure, monomer.

The protein localises to the cytoplasm. It carries out the reaction L-lysyl-[lipoyl-carrier protein] + (R)-lipoate + ATP = N(6)-[(R)-lipoyl]-L-lysyl-[lipoyl-carrier protein] + AMP + diphosphate + H(+). It participates in protein modification; protein lipoylation via exogenous pathway; protein N(6)-(lipoyl)lysine from lipoate: step 1/2. Its pathway is protein modification; protein lipoylation via exogenous pathway; protein N(6)-(lipoyl)lysine from lipoate: step 2/2. Functionally, catalyzes both the ATP-dependent activation of exogenously supplied lipoate to lipoyl-AMP and the transfer of the activated lipoyl onto the lipoyl domains of lipoate-dependent enzymes. The sequence is that of Lipoate-protein ligase A from Salmonella newport (strain SL254).